We begin with the raw amino-acid sequence, 98 residues long: Large ribosomal subunit protein uL23 (98 aa).

The protein belongs to the universal ribosomal protein uL23 family. Part of the 50S ribosomal subunit. Contacts protein L29, and trigger factor when it is bound to the ribosome.

One of the early assembly proteins it binds 23S rRNA. One of the proteins that surrounds the polypeptide exit tunnel on the outside of the ribosome. Forms the main docking site for trigger factor binding to the ribosome. The chain is Large ribosomal subunit protein uL23 from Teredinibacter turnerae (strain ATCC 39867 / T7901).